The following is a 418-amino-acid chain: Inward rectifier potassium channel 16 (418 aa).

Over 1-67 (MSYYGSSYHI…VVDIFTTLVD (67 aa)) the chain is Cytoplasmic. A helical membrane pass occupies residues 68-94 (TKWRHMFVIFSLSYILSWLIFGSVFWL). The Extracellular segment spans residues 95–117 (IAFHHGDLLNDPDITPCVDNVHS). The helical; Pore-forming intramembrane region spans 118–134 (FTGAFLFSLETQTTIGY). The Selectivity filter signature appears at 131–136 (TIGYGY). Topologically, residues 135-143 (GYRCVTEEC) are extracellular. The helical transmembrane segment at 144 to 171 (SVAVLMVILQSILSCIINTFIIGAALAK) threads the bilayer. Topologically, residues 172 to 418 (MATARKRAQT…LNRISVESQM (247 aa)) are cytoplasmic. Ser373 and Ser375 each carry phosphoserine.

It belongs to the inward rectifier-type potassium channel (TC 1.A.2.1) family. KCNJ16 subfamily. In terms of assembly, it forms heteromeric channels with Kir4.1/KCNJ10; this interaction is required for KCNJ16 localization to the basolateral membrane in kidney cells. As a heteromer with KCNJ10, may interact with MAGI1; this interaction may facilitate KCNJ10/KCNJ16 potassium channel expression at the basolateral membrane in kidney cells. May form heteromers with Kir2.1/KCNJ2. Can form heteromeric channels with Kir4.2/KCNJ15. Widely expressed, with highest levels in adult and fetal kidney (at protein level). In the kidney, expressed in the proximal and distal convoluted tubules, but not in glomeruli nor collecting ducts.

It localises to the membrane. It is found in the basolateral cell membrane. It catalyses the reaction K(+)(in) = K(+)(out). With respect to regulation, channel activity is strongly regulated by variations of cytosolic pH; channels are activated by alkaline and inhibited by acidic pH values. Activated by phosphatidylinositol 4,5 biphosphate (PtdIns(4,5)P2). Inward rectifier potassium channels are characterized by a greater tendency to allow potassium to flow into the cell rather than out of it. Their voltage dependence is regulated by the concentration of extracellular potassium; as external potassium is raised, the voltage range of the channel opening shifts to more positive voltages. The inward rectification is mainly due to the blockage of outward current by internal magnesium. KCNJ16 may be involved in the regulation of fluid and pH balance. In the kidney, together with KCNJ10, mediates basolateral K(+) recycling in distal tubules; this process is critical for Na(+) reabsorption at the tubules. The sequence is that of Inward rectifier potassium channel 16 (KCNJ16) from Homo sapiens (Human).